Consider the following 191-residue polypeptide: Large ribosomal subunit protein uL22 (191 aa).

The segment covering 159-168 has biased composition (basic and acidic residues); the sequence is VPKGEDDTAQ. Residues 159 to 191 form a disordered region; the sequence is VPKGEDDTAQKKKVSQKKLKKQKLKAALSGGAD. Residues 169–182 are compositionally biased toward basic residues; it reads KKKVSQKKLKKQKL.

This sequence belongs to the universal ribosomal protein uL22 family.

This chain is Large ribosomal subunit protein uL22 (RPL17), found in Suberites domuncula (Sponge).